The chain runs to 205 residues: Ribosome maturation factor RimP (205 aa).

The segment covering 1–12 (MSNAEAQASSDH) has biased composition (polar residues). Disordered regions lie at residues 1–24 (MSNA…APAH) and 186–205 (FSHL…SEEA).

It belongs to the RimP family.

Its subcellular location is the cytoplasm. Functionally, required for maturation of 30S ribosomal subunits. This chain is Ribosome maturation factor RimP, found in Pseudarthrobacter chlorophenolicus (strain ATCC 700700 / DSM 12829 / CIP 107037 / JCM 12360 / KCTC 9906 / NCIMB 13794 / A6) (Arthrobacter chlorophenolicus).